An 860-amino-acid polypeptide reads, in one-letter code: Alpha,alpha-trehalose-phosphate synthase [UDP-forming] 6 (860 aa).

Residue Ser-5 is modified to Phosphoserine. The glycosyltransferase stretch occupies residues 53–557 (DRIIIVANEL…ARSFLQDLER (505 aa)).

It in the N-terminal section; belongs to the glycosyltransferase 20 family. The protein in the C-terminal section; belongs to the trehalose phosphatase family. As to quaternary structure, binds to the phosphopeptide-binding site of GRF/14-3-3. Post-translationally, phosphorylated. Expressed in seedlings, leaves, stems, flowers, siliques and roots.

It carries out the reaction D-glucose 6-phosphate + UDP-alpha-D-glucose = alpha,alpha-trehalose 6-phosphate + UDP + H(+). In terms of biological role, regulates plant architecture, shape of epidermal pavement cells and branching of trichomes. In Arabidopsis thaliana (Mouse-ear cress), this protein is Alpha,alpha-trehalose-phosphate synthase [UDP-forming] 6.